Consider the following 101-residue polypeptide: Trp operon repressor homolog (101 aa).

Residues 59–82 mediate DNA binding; it reads QREIAQKYGVSIAQITRGSNALKA.

It belongs to the TrpR family. As to quaternary structure, homodimer.

It localises to the cytoplasm. Its function is as follows. This protein is an aporepressor. When complexed with L-tryptophan it binds the operator region of the trp operon and prevents the initiation of transcription. The chain is Trp operon repressor homolog from Chlamydia caviae (strain ATCC VR-813 / DSM 19441 / 03DC25 / GPIC) (Chlamydophila caviae).